The chain runs to 339 residues: DNA-directed RNA polymerase subunit alpha (339 aa).

Positions 1–235 are alpha N-terminal domain (alpha-NTD); the sequence is MTIQKNWQEL…DQLNVFVNFE (235 aa). Positions 251 to 339 are alpha C-terminal domain (alpha-CTD); sequence FNPAFLKKVD…ELAKRFEDHY (89 aa).

The protein belongs to the RNA polymerase alpha chain family. In terms of assembly, homodimer. The RNAP catalytic core consists of 2 alpha, 1 beta, 1 beta' and 1 omega subunit. When a sigma factor is associated with the core the holoenzyme is formed, which can initiate transcription.

It carries out the reaction RNA(n) + a ribonucleoside 5'-triphosphate = RNA(n+1) + diphosphate. Functionally, DNA-dependent RNA polymerase catalyzes the transcription of DNA into RNA using the four ribonucleoside triphosphates as substrates. In Nitrobacter winogradskyi (strain ATCC 25391 / DSM 10237 / CIP 104748 / NCIMB 11846 / Nb-255), this protein is DNA-directed RNA polymerase subunit alpha.